Consider the following 136-residue polypeptide: Plastocyanin (136 aa).

Residues 1 to 34 (MSLVFNLVKRLQLILLSLVVGGLAVAFLSNPAAA) form the signal peptide. One can recognise a Plastocyanin-like domain in the interval 35-136 (ETYIVKMGSD…GMVGKIIVNG (102 aa)). Cu cation is bound by residues histidine 73, cysteine 120, histidine 123, and methionine 128.

It belongs to the plastocyanin family. The cofactor is Cu(2+).

It localises to the cellular thylakoid membrane. Participates in electron transfer between P700 and the cytochrome b6-f complex in photosystem I. This is Plastocyanin from Synechococcus sp. (strain JA-2-3B'a(2-13)) (Cyanobacteria bacterium Yellowstone B-Prime).